A 449-amino-acid chain; its full sequence is Asparagine--tRNA ligase (449 aa).

Belongs to the class-II aminoacyl-tRNA synthetase family. As to quaternary structure, homodimer.

The protein localises to the cytoplasm. It catalyses the reaction tRNA(Asn) + L-asparagine + ATP = L-asparaginyl-tRNA(Asn) + AMP + diphosphate + H(+). This Mesomycoplasma hyopneumoniae (strain J / ATCC 25934 / NCTC 10110) (Mycoplasma hyopneumoniae) protein is Asparagine--tRNA ligase.